A 66-amino-acid chain; its full sequence is Putative membrane protein insertion efficiency factor (66 aa).

The protein belongs to the UPF0161 family.

It is found in the cell inner membrane. Its function is as follows. Could be involved in insertion of integral membrane proteins into the membrane. The protein is Putative membrane protein insertion efficiency factor of Parasynechococcus marenigrum (strain WH8102).